The chain runs to 635 residues: Phosphatidylserine decarboxylase proenzyme 3 (635 aa).

The disordered stretch occupies residues 1–42; sequence MGNGNSTETKESRRSKMRKKIQNFRSRRRLSRPGSGSVSGLA. A lipid anchor (N-myristoyl glycine) is attached at Gly2. The segment covering 15–31 has biased composition (basic residues); it reads SKMRKKIQNFRSRRRLS. A C2 domain is found at 22–147; that stretch reads QNFRSRRRLS…VVQEPDSTCK (126 aa). 2 consecutive EF-hand domains span residues 180–210 and 211–246; these read AKRILSIVDYDEDGKLSFSEFSDLMNAFGNV and VAANKKEELFKAADLNGDGVVTIDELAALLAVQQEQ. Positions 188, 190, 192, 194, 199, 224, 226, 228, and 235 each coordinate Ca(2+). Active-site charge relay system; for autoendoproteolytic cleavage activity residues include Asp442, His498, and Ser586. Ser586 serves as the catalytic Schiff-base intermediate with substrate; via pyruvic acid; for decarboxylase activity. A Pyruvic acid (Ser); by autocatalysis modification is found at Ser586.

It belongs to the phosphatidylserine decarboxylase family. PSD-B subfamily. Eukaryotic type II sub-subfamily. Heterodimer of a large membrane-associated beta subunit and a small pyruvoyl-containing alpha subunit. The cofactor is pyruvate. Post-translationally, is synthesized initially as an inactive proenzyme. Formation of the active enzyme involves a self-maturation process in which the active site pyruvoyl group is generated from an internal serine residue via an autocatalytic post-translational modification. Two non-identical subunits are generated from the proenzyme in this reaction, and the pyruvate is formed at the N-terminus of the alpha chain, which is derived from the carboxyl end of the proenzyme. The autoendoproteolytic cleavage occurs by a canonical serine protease mechanism, in which the side chain hydroxyl group of the serine supplies its oxygen atom to form the C-terminus of the beta chain, while the remainder of the serine residue undergoes an oxidative deamination to produce ammonia and the pyruvoyl prosthetic group on the alpha chain. During this reaction, the Ser that is part of the protease active site of the proenzyme becomes the pyruvoyl prosthetic group, which constitutes an essential element of the active site of the mature decarboxylase. As to expression, expressed in roots, leaves, stems and flowers.

The protein localises to the endoplasmic reticulum membrane. The enzyme catalyses a 1,2-diacyl-sn-glycero-3-phospho-L-serine + H(+) = a 1,2-diacyl-sn-glycero-3-phosphoethanolamine + CO2. It participates in phospholipid metabolism; phosphatidylethanolamine biosynthesis; phosphatidylethanolamine from CDP-diacylglycerol: step 2/2. In terms of biological role, catalyzes the formation of phosphatidylethanolamine (PtdEtn) from phosphatidylserine (PtdSer). Plays a central role in phospholipid metabolism and in the interorganelle trafficking of phosphatidylserine. Contributes only to a minor proportion of PtdEtn production. The chain is Phosphatidylserine decarboxylase proenzyme 3 (PSD3) from Arabidopsis thaliana (Mouse-ear cress).